We begin with the raw amino-acid sequence, 221 residues long: Uracil-DNA glycosylase 1 (221 aa).

The Proton acceptor role is filled by aspartate 61.

Belongs to the uracil-DNA glycosylase (UDG) superfamily. UNG family.

Its subcellular location is the cytoplasm. The enzyme catalyses Hydrolyzes single-stranded DNA or mismatched double-stranded DNA and polynucleotides, releasing free uracil.. Functionally, excises uracil residues from the DNA which can arise as a result of misincorporation of dUMP residues by DNA polymerase or due to deamination of cytosine. The sequence is that of Uracil-DNA glycosylase 1 from Listeria innocua serovar 6a (strain ATCC BAA-680 / CLIP 11262).